The following is a 307-amino-acid chain: Mitochondrial glycine transporter (307 aa).

Solcar repeat units lie at residues 8–87 (PRNS…MRSS), 115–199 (LTMY…SKQL), and 221–305 (TSTT…LVKR). Helical transmembrane passes span 14 to 39 (LIGGFFGGLTSAVALQPLDLLKTRIQ), 62 to 88 (GTLPSALRTSIGSALYLSCLNLMRSSL), 121 to 146 (LLTGAFARGLVGYITMPITVIKVRYE), 174 to 197 (GFGATCLRDAPYAGLYVLLYEKSK), 225 to 251 (VNTTSAVLSASLATTVTAPFDTIKTRM), and 280 to 298 (GLSMRLARKALSAGIAWGI).

The protein belongs to the mitochondrial carrier (TC 2.A.29) family. SLC25A38 subfamily.

It is found in the mitochondrion inner membrane. It carries out the reaction glycine(in) = glycine(out). In terms of biological role, mitochondrial glycine transporter that imports glycine into the mitochondrial matrix. Plays an important role in providing glycine for the first enzymatic step in heme biosynthesis, the condensation of glycine with succinyl-CoA to produce 5-aminolevulinate (ALA) in the mitochondrial matrix. The chain is Mitochondrial glycine transporter from Saccharomyces cerevisiae (strain RM11-1a) (Baker's yeast).